We begin with the raw amino-acid sequence, 193 residues long: Imidazoleglycerol-phosphate dehydratase (193 aa).

This sequence belongs to the imidazoleglycerol-phosphate dehydratase family.

Its subcellular location is the cytoplasm. The catalysed reaction is D-erythro-1-(imidazol-4-yl)glycerol 3-phosphate = 3-(imidazol-4-yl)-2-oxopropyl phosphate + H2O. Its pathway is amino-acid biosynthesis; L-histidine biosynthesis; L-histidine from 5-phospho-alpha-D-ribose 1-diphosphate: step 6/9. This chain is Imidazoleglycerol-phosphate dehydratase, found in Staphylococcus carnosus (strain TM300).